Reading from the N-terminus, the 120-residue chain is UPF0102 protein Moth_0988 (120 aa).

Belongs to the UPF0102 family.

The protein is UPF0102 protein Moth_0988 of Moorella thermoacetica (strain ATCC 39073 / JCM 9320).